Reading from the N-terminus, the 211-residue chain is Imidazole glycerol phosphate synthase subunit HisH (211 aa).

A Glutamine amidotransferase type-1 domain is found at 1-206 (MIGIIDYGRG…GKWVNEDATV (206 aa)). Cysteine 79 functions as the Nucleophile in the catalytic mechanism. Active-site residues include histidine 181 and glutamate 183.

Heterodimer of HisH and HisF.

The protein resides in the cytoplasm. It carries out the reaction 5-[(5-phospho-1-deoxy-D-ribulos-1-ylimino)methylamino]-1-(5-phospho-beta-D-ribosyl)imidazole-4-carboxamide + L-glutamine = D-erythro-1-(imidazol-4-yl)glycerol 3-phosphate + 5-amino-1-(5-phospho-beta-D-ribosyl)imidazole-4-carboxamide + L-glutamate + H(+). The enzyme catalyses L-glutamine + H2O = L-glutamate + NH4(+). It functions in the pathway amino-acid biosynthesis; L-histidine biosynthesis; L-histidine from 5-phospho-alpha-D-ribose 1-diphosphate: step 5/9. Its function is as follows. IGPS catalyzes the conversion of PRFAR and glutamine to IGP, AICAR and glutamate. The HisH subunit catalyzes the hydrolysis of glutamine to glutamate and ammonia as part of the synthesis of IGP and AICAR. The resulting ammonia molecule is channeled to the active site of HisF. In Desulfitobacterium hafniense (strain Y51), this protein is Imidazole glycerol phosphate synthase subunit HisH.